Reading from the N-terminus, the 221-residue chain is MSEEWVPKTQLGKLVASGQIKTMGEALRSKLPLKEYEIVDYLLPNLKDEVIDIKRAQRMTDSGRRMTYSITVVVGNGDGYVGLGIGRSKEAAPAIRKALINAKLNIMEIRRGCGSWECGCGRAHTLPFLVQGKSGSVRITLKPAPRGVGLAVGDVARTILSIAGIEDAWGFAAGHTKTTVNYALAVYNALKETSKVRINPGIVLSTPIYSGSVVNVSGHKD.

The S5 DRBM domain occupies 46-109 (LKDEVIDIKR…INAKLNIMEI (64 aa)).

This sequence belongs to the universal ribosomal protein uS5 family. As to quaternary structure, part of the 30S ribosomal subunit. Contacts protein S4.

Functionally, with S4 and S12 plays an important role in translational accuracy. The protein is Small ribosomal subunit protein uS5 of Thermoplasma acidophilum (strain ATCC 25905 / DSM 1728 / JCM 9062 / NBRC 15155 / AMRC-C165).